The chain runs to 180 residues: NAD(P)H-quinone oxidoreductase subunit 6, chloroplastic (180 aa).

5 helical membrane passes run 10 to 30 (ILLVPLELGLILGGLEVVLLT), 32 to 52 (IIYSALSLGPVLVCISLLYIL), 57 to 77 (FVAAAQILIYVGAVNVLIVFA), 95 to 115 (VGDGITLVVCTSLFCSLITII), and 153 to 173 (FLPFELLSIILLVALVGAITI).

It belongs to the complex I subunit 6 family. As to quaternary structure, NDH is composed of at least 16 different subunits, 5 of which are encoded in the nucleus.

It localises to the plastid. It is found in the chloroplast thylakoid membrane. It catalyses the reaction a plastoquinone + NADH + (n+1) H(+)(in) = a plastoquinol + NAD(+) + n H(+)(out). The catalysed reaction is a plastoquinone + NADPH + (n+1) H(+)(in) = a plastoquinol + NADP(+) + n H(+)(out). Its function is as follows. NDH shuttles electrons from NAD(P)H:plastoquinone, via FMN and iron-sulfur (Fe-S) centers, to quinones in the photosynthetic chain and possibly in a chloroplast respiratory chain. The immediate electron acceptor for the enzyme in this species is believed to be plastoquinone. Couples the redox reaction to proton translocation, and thus conserves the redox energy in a proton gradient. The polypeptide is NAD(P)H-quinone oxidoreductase subunit 6, chloroplastic (ndhG) (Cycas taitungensis (Prince sago)).